The sequence spans 604 residues: Rhotekin-2 (604 aa).

One can recognise an REM-1 domain in the interval 1–74; it reads MEGQLLRGLA…LQKSKEEIAN (74 aa). A coiled-coil region spans residues 53–79; it reads VCSARIQAYTAELQKSKEEIANQTGAR. In terms of domain architecture, PH spans 281–387; sequence ADAFAGFLNE…WMGAFRQHFF (107 aa). The disordered stretch occupies residues 481–590; that stretch reads LSPIGEPAPD…PVPVPRQKSI (110 aa). Positions 514–527 are enriched in polar residues; sequence GRANQSKDSATQAG. Low complexity predominate over residues 529 to 543; that stretch reads SGASSSPSDPRLSPP.

Its function is as follows. May play an important role in lymphopoiesis. In Mus musculus (Mouse), this protein is Rhotekin-2 (Rtkn2).